The chain runs to 160 residues: SsrA-binding protein (160 aa).

This sequence belongs to the SmpB family.

The protein localises to the cytoplasm. Its function is as follows. Required for rescue of stalled ribosomes mediated by trans-translation. Binds to transfer-messenger RNA (tmRNA), required for stable association of tmRNA with ribosomes. tmRNA and SmpB together mimic tRNA shape, replacing the anticodon stem-loop with SmpB. tmRNA is encoded by the ssrA gene; the 2 termini fold to resemble tRNA(Ala) and it encodes a 'tag peptide', a short internal open reading frame. During trans-translation Ala-aminoacylated tmRNA acts like a tRNA, entering the A-site of stalled ribosomes, displacing the stalled mRNA. The ribosome then switches to translate the ORF on the tmRNA; the nascent peptide is terminated with the 'tag peptide' encoded by the tmRNA and targeted for degradation. The ribosome is freed to recommence translation, which seems to be the essential function of trans-translation. The chain is SsrA-binding protein from Enterobacter sp. (strain 638).